A 270-amino-acid polypeptide reads, in one-letter code: Putative pyruvate, phosphate dikinase regulatory protein (270 aa).

Position 151–158 (151–158) interacts with ADP; it reads GVSRTSKT.

This sequence belongs to the pyruvate, phosphate/water dikinase regulatory protein family. PDRP subfamily.

It carries out the reaction N(tele)-phospho-L-histidyl/L-threonyl-[pyruvate, phosphate dikinase] + ADP = N(tele)-phospho-L-histidyl/O-phospho-L-threonyl-[pyruvate, phosphate dikinase] + AMP + H(+). The enzyme catalyses N(tele)-phospho-L-histidyl/O-phospho-L-threonyl-[pyruvate, phosphate dikinase] + phosphate + H(+) = N(tele)-phospho-L-histidyl/L-threonyl-[pyruvate, phosphate dikinase] + diphosphate. In terms of biological role, bifunctional serine/threonine kinase and phosphorylase involved in the regulation of the pyruvate, phosphate dikinase (PPDK) by catalyzing its phosphorylation/dephosphorylation. This is Putative pyruvate, phosphate dikinase regulatory protein from Lysinibacillus sphaericus (strain C3-41).